The chain runs to 309 residues: Homoserine O-succinyltransferase (309 aa).

The active-site Acyl-thioester intermediate is C142. 2 residues coordinate substrate: K163 and S192. H235 functions as the Proton acceptor in the catalytic mechanism. E237 is a catalytic residue. R249 provides a ligand contact to substrate.

The protein belongs to the MetA family.

It is found in the cytoplasm. The enzyme catalyses L-homoserine + succinyl-CoA = O-succinyl-L-homoserine + CoA. The protein operates within amino-acid biosynthesis; L-methionine biosynthesis via de novo pathway; O-succinyl-L-homoserine from L-homoserine: step 1/1. Its function is as follows. Transfers a succinyl group from succinyl-CoA to L-homoserine, forming succinyl-L-homoserine. This is Homoserine O-succinyltransferase from Pectobacterium carotovorum subsp. carotovorum (strain PC1).